Reading from the N-terminus, the 411-residue chain is MRAERTSFLLALGLLVAGIRSVHCLPENVVVKDQHRRVDGHTLASSNTDFAFSLYKQLALKNPNKNVILSPLSVSIALAFLSLGARGSTLTEILEGLKFNLTEIQEKEIHHSFQHLLQALNQPSNQLQLSVGNAMFVQEELKLLDKFIEDAQVLYSSEAFPTNFRDSEAARSLINDYVKNKTQGKIEELFKYLSPRTELVLVNYIYFKAQWKTPFDPKHTEQAEFHVSDNKTVEVPMMTLDLETPYFRDEELGCTLVELTYTSNDSALFILPDEGKMRDLEAKLTPETLTRWRNSLQPRRIHELYLPKFSIKSNYELNDILSQLGIRKIFANADLSGITGTADLVVSQVVHGAALDVDEEGTEGAAATGISMERTILRIIVRVNRPFLIAIVLKDTQSIIFLGKVTNPSEA.

An N-terminal signal peptide occupies residues 1 to 24; the sequence is MRAERTSFLLALGLLVAGIRSVHC. N-linked (GlcNAc...) asparagine glycosylation is found at asparagine 100, asparagine 180, asparagine 230, and asparagine 264.

This sequence belongs to the serpin family. As to quaternary structure, homodimer. In terms of processing, N-glycosylated. As to expression, detected in all tissues examined (at protein level). Abundantly expressed in liver, kidney and spleen. Lowest levels were observed in diaphragm muscle.

The protein resides in the cytoplasmic vesicle. Its subcellular location is the secretory vesicle. The protein localises to the chromaffin granule. It localises to the secreted. In terms of biological role, potent inhibitor of the serine proteases elastase and trypsin. Moderately inhibits the serine proteases plasmin and chymotrypsin, and the thiol protease proenkephalin-processing enzyme. Does not inhibit the serine proteases cathepsin G, furin, kallikrein, thrombin, tissue plasminogen activator and urokinase, or the cysteine proteases cathepsin B, cathepsin L and papain. This chain is Serpin A3-1, found in Bos taurus (Bovine).